The chain runs to 407 residues: Bifunctional enzyme IspD/IspF (407 aa).

The interval methionine 1–isoleucine 246 is 2-C-methyl-D-erythritol 4-phosphate cytidylyltransferase. The tract at residues arginine 247 to glutamate 407 is 2-C-methyl-D-erythritol 2,4-cyclodiphosphate synthase. Residues aspartate 253 and histidine 255 each coordinate a divalent metal cation. 4-CDP-2-C-methyl-D-erythritol 2-phosphate-binding positions include aspartate 253–histidine 255 and histidine 279–serine 280. Histidine 287 contacts a divalent metal cation. 4-CDP-2-C-methyl-D-erythritol 2-phosphate contacts are provided by residues aspartate 301–glycine 303, threonine 377–glutamate 380, phenylalanine 384, and arginine 387.

It in the N-terminal section; belongs to the IspD/TarI cytidylyltransferase family. IspD subfamily. In the C-terminal section; belongs to the IspF family. Requires a divalent metal cation as cofactor.

The enzyme catalyses 2-C-methyl-D-erythritol 4-phosphate + CTP + H(+) = 4-CDP-2-C-methyl-D-erythritol + diphosphate. It carries out the reaction 4-CDP-2-C-methyl-D-erythritol 2-phosphate = 2-C-methyl-D-erythritol 2,4-cyclic diphosphate + CMP. The protein operates within isoprenoid biosynthesis; isopentenyl diphosphate biosynthesis via DXP pathway; isopentenyl diphosphate from 1-deoxy-D-xylulose 5-phosphate: step 2/6. It participates in isoprenoid biosynthesis; isopentenyl diphosphate biosynthesis via DXP pathway; isopentenyl diphosphate from 1-deoxy-D-xylulose 5-phosphate: step 4/6. In terms of biological role, bifunctional enzyme that catalyzes the formation of 4-diphosphocytidyl-2-C-methyl-D-erythritol from CTP and 2-C-methyl-D-erythritol 4-phosphate (MEP) (IspD), and catalyzes the conversion of 4-diphosphocytidyl-2-C-methyl-D-erythritol 2-phosphate (CDP-ME2P) to 2-C-methyl-D-erythritol 2,4-cyclodiphosphate (ME-CPP) with a corresponding release of cytidine 5-monophosphate (CMP) (IspF). The protein is Bifunctional enzyme IspD/IspF of Brucella anthropi (strain ATCC 49188 / DSM 6882 / CCUG 24695 / JCM 21032 / LMG 3331 / NBRC 15819 / NCTC 12168 / Alc 37) (Ochrobactrum anthropi).